The sequence spans 198 residues: T-cell surface glycoprotein CD3 epsilon chain (198 aa).

The N-terminal stretch at 1 to 21 is a signal peptide; it reads MQSGTRWRVLGLCLLSIGVWG. Residues 22 to 117 are Extracellular-facing; it reads QDGNEEMGSI…RVCENCMEMD (96 aa). The Ig-like domain maps to 37–107; the sequence is QVSISGTTVI…DASHHLYLKA (71 aa). A disulfide bridge connects residues C49 and C89. The chain crosses the membrane as a helical span at residues 118 to 138; sequence VMAVATIVIVDICITLGLLLL. The Cytoplasmic portion of the chain corresponds to 139-198; sequence VYYWSKNRKAKAKPVTRGAGAGGRQRGQNKERPPPVPNPDYEPIRKGQQDLYSGLNQRRI. Residues 152 to 198 are disordered; that stretch reads PVTRGAGAGGRQRGQNKERPPPVPNPDYEPIRKGQQDLYSGLNQRRI. An NUMB-binding region region spans residues 166 to 183; the sequence is QNKERPPPVPNPDYEPIR. An ITAM domain is found at 169–196; it reads ERPPPVPNPDYEPIRKGQQDLYSGLNQR. Residues 170-177 form a proline-rich sequence region; the sequence is RPPPVPNP. A phosphotyrosine mark is found at Y179 and Y190. Residues 188–198 are compositionally biased toward polar residues; the sequence is DLYSGLNQRRI.

As to quaternary structure, the TCR-CD3 complex is composed of a CD3D/CD3E and a CD3G/CD3E heterodimers that preferentially associate with TCRalpha and TCRbeta, respectively, to form TCRalpha/CD3E/CD3G and TCRbeta/CD3G/CD3E trimers. In turn, the hexamer interacts with CD3Z homodimer to form the TCR-CD3 complex. Alternatively, TCRalpha and TCRbeta can be replaced by TCRgamma and TCRdelta. Interacts with CD6. Interacts (via Proline-rich sequence) with NCK1; the interaction is ligand dependent but independent of tyrosine kinase activation. In terms of processing, phosphorylated on Tyr residues after T-cell receptor triggering by LCK in association with CD4/CD8.

The protein localises to the cell membrane. Functionally, part of the TCR-CD3 complex present on T-lymphocyte cell surface that plays an essential role in adaptive immune response. When antigen presenting cells (APCs) activate T-cell receptor (TCR), TCR-mediated signals are transmitted across the cell membrane by the CD3 chains CD3D, CD3E, CD3G and CD3Z. All CD3 chains contain immunoreceptor tyrosine-based activation motifs (ITAMs) in their cytoplasmic domain. Upon TCR engagement, these motifs become phosphorylated by Src family protein tyrosine kinases LCK and FYN, resulting in the activation of downstream signaling pathways. In addition of this role of signal transduction in T-cell activation, CD3E plays an essential role in correct T-cell development. Also participates in internalization and cell surface down-regulation of TCR-CD3 complexes via endocytosis sequences present in CD3E cytosolic region. In addition to its role as a TCR coreceptor, it serves as a receptor for ITPRIPL1. Ligand recognition inhibits T-cell activation by promoting interaction with NCK1, which prevents CD3E-ZAP70 interaction and blocks the ERK-NFkB signaling cascade and calcium influx. The protein is T-cell surface glycoprotein CD3 epsilon chain (CD3E) of Macaca fascicularis (Crab-eating macaque).